Consider the following 512-residue polypeptide: Choline-sulfatase (512 aa).

Ca(2+) contacts are provided by aspartate 14, glutamine 15, and cysteine 54. Cysteine 54 acts as the Nucleophile in catalysis. Cysteine 54 carries the 3-oxoalanine (Cys) modification. Histidine 104 is a catalytic residue. Ca(2+)-binding residues include aspartate 296 and histidine 297.

This sequence belongs to the sulfatase family. Requires Ca(2+) as cofactor. In terms of processing, the conversion to 3-oxoalanine (also known as C-formylglycine, FGly), of a serine or cysteine residue in prokaryotes and of a cysteine residue in eukaryotes, is critical for catalytic activity.

The enzyme catalyses choline sulfate + H2O = choline + sulfate + H(+). Its pathway is amine and polyamine biosynthesis; choline biosynthesis; choline from choline sulfate: step 1/1. Its function is as follows. Converts choline-O-sulfate into choline. This chain is Choline-sulfatase (betC), found in Rhizobium meliloti (strain 1021) (Ensifer meliloti).